A 124-amino-acid chain; its full sequence is Large ribosomal subunit protein bL12 (124 aa).

This sequence belongs to the bacterial ribosomal protein bL12 family. As to quaternary structure, homodimer. Part of the ribosomal stalk of the 50S ribosomal subunit. Forms a multimeric L10(L12)X complex, where L10 forms an elongated spine to which 2 to 4 L12 dimers bind in a sequential fashion. Binds GTP-bound translation factors.

Its function is as follows. Forms part of the ribosomal stalk which helps the ribosome interact with GTP-bound translation factors. Is thus essential for accurate translation. In Desulforamulus reducens (strain ATCC BAA-1160 / DSM 100696 / MI-1) (Desulfotomaculum reducens), this protein is Large ribosomal subunit protein bL12.